The following is a 187-amino-acid chain: UPF0200 protein MM_1313 (187 aa).

9–16 contributes to the ATP binding site; the sequence is GMPASGKS.

It belongs to the UPF0200 family.

The polypeptide is UPF0200 protein MM_1313 (Methanosarcina mazei (strain ATCC BAA-159 / DSM 3647 / Goe1 / Go1 / JCM 11833 / OCM 88) (Methanosarcina frisia)).